A 160-amino-acid polypeptide reads, in one-letter code: SsrA-binding protein (160 aa).

The tract at residues 136–160 (KRHVEKERDANREVQRAMRSKGKDD) is disordered.

This sequence belongs to the SmpB family.

The protein resides in the cytoplasm. Functionally, required for rescue of stalled ribosomes mediated by trans-translation. Binds to transfer-messenger RNA (tmRNA), required for stable association of tmRNA with ribosomes. tmRNA and SmpB together mimic tRNA shape, replacing the anticodon stem-loop with SmpB. tmRNA is encoded by the ssrA gene; the 2 termini fold to resemble tRNA(Ala) and it encodes a 'tag peptide', a short internal open reading frame. During trans-translation Ala-aminoacylated tmRNA acts like a tRNA, entering the A-site of stalled ribosomes, displacing the stalled mRNA. The ribosome then switches to translate the ORF on the tmRNA; the nascent peptide is terminated with the 'tag peptide' encoded by the tmRNA and targeted for degradation. The ribosome is freed to recommence translation, which seems to be the essential function of trans-translation. The polypeptide is SsrA-binding protein (Ectopseudomonas mendocina (strain ymp) (Pseudomonas mendocina)).